The primary structure comprises 315 residues: Acetaldehyde dehydrogenase 2 (315 aa).

13 to 16 is an NAD(+) binding site; that stretch reads SGNI. Cys131 serves as the catalytic Acyl-thioester intermediate. NAD(+)-binding positions include 162 to 170 and Asn290; that span reads SAGPGTRAN.

Belongs to the acetaldehyde dehydrogenase family.

It catalyses the reaction acetaldehyde + NAD(+) + CoA = acetyl-CoA + NADH + H(+). The sequence is that of Acetaldehyde dehydrogenase 2 from Pseudomonas putida (strain W619).